A 200-amino-acid polypeptide reads, in one-letter code: Probable nicotinate-nucleotide adenylyltransferase (200 aa).

The protein belongs to the NadD family.

The catalysed reaction is nicotinate beta-D-ribonucleotide + ATP + H(+) = deamido-NAD(+) + diphosphate. The protein operates within cofactor biosynthesis; NAD(+) biosynthesis; deamido-NAD(+) from nicotinate D-ribonucleotide: step 1/1. In terms of biological role, catalyzes the reversible adenylation of nicotinate mononucleotide (NaMN) to nicotinic acid adenine dinucleotide (NaAD). The sequence is that of Probable nicotinate-nucleotide adenylyltransferase from Leifsonia xyli subsp. xyli (strain CTCB07).